A 185-amino-acid chain; its full sequence is Large ribosomal subunit protein uL5 (185 aa).

The protein belongs to the universal ribosomal protein uL5 family. Part of the 50S ribosomal subunit; part of the 5S rRNA/L5/L18/L25 subcomplex. Contacts the 5S rRNA and the P site tRNA. Forms a bridge to the 30S subunit in the 70S ribosome.

This is one of the proteins that bind and probably mediate the attachment of the 5S RNA into the large ribosomal subunit, where it forms part of the central protuberance. In the 70S ribosome it contacts protein S13 of the 30S subunit (bridge B1b), connecting the 2 subunits; this bridge is implicated in subunit movement. Contacts the P site tRNA; the 5S rRNA and some of its associated proteins might help stabilize positioning of ribosome-bound tRNAs. This is Large ribosomal subunit protein uL5 from Xanthobacter autotrophicus (strain ATCC BAA-1158 / Py2).